The sequence spans 558 residues: Arginine--tRNA ligase (558 aa).

Positions 119-129 (ANPNGPLHVGH) match the 'HIGH' region motif.

The protein belongs to the class-I aminoacyl-tRNA synthetase family.

The protein resides in the cytoplasm. It carries out the reaction tRNA(Arg) + L-arginine + ATP = L-arginyl-tRNA(Arg) + AMP + diphosphate. The sequence is that of Arginine--tRNA ligase from Methanoregula boonei (strain DSM 21154 / JCM 14090 / 6A8).